The primary structure comprises 446 residues: Histidine--tRNA ligase (446 aa).

The protein belongs to the class-II aminoacyl-tRNA synthetase family. In terms of assembly, homodimer.

It localises to the cytoplasm. The enzyme catalyses tRNA(His) + L-histidine + ATP = L-histidyl-tRNA(His) + AMP + diphosphate + H(+). In Burkholderia lata (strain ATCC 17760 / DSM 23089 / LMG 22485 / NCIMB 9086 / R18194 / 383), this protein is Histidine--tRNA ligase.